The chain runs to 210 residues: Proteasome subunit beta 2 (210 aa).

Positions 1–12 (MSNNVEEKILHG) are cleaved as a propeptide — removed in mature form; by autocatalysis. The active-site Nucleophile is threonine 13.

The protein belongs to the peptidase T1B family. As to quaternary structure, the 20S proteasome core is composed of 14 alpha and 14 beta subunits that assemble into four stacked heptameric rings, resulting in a barrel-shaped structure. The two inner rings, each composed of seven catalytic beta subunits, are sandwiched by two outer rings, each composed of seven alpha subunits. The catalytic chamber with the active sites is on the inside of the barrel. Has a gated structure, the ends of the cylinder being occluded by the N-termini of the alpha-subunits. Is capped at one or both ends by the proteasome regulatory ATPase, PAN.

The protein resides in the cytoplasm. It carries out the reaction Cleavage of peptide bonds with very broad specificity.. Its activity is regulated as follows. The formation of the proteasomal ATPase PAN-20S proteasome complex, via the docking of the C-termini of PAN into the intersubunit pockets in the alpha-rings, triggers opening of the gate for substrate entry. Interconversion between the open-gate and close-gate conformations leads to a dynamic regulation of the 20S proteasome proteolysis activity. Functionally, component of the proteasome core, a large protease complex with broad specificity involved in protein degradation. This is Proteasome subunit beta 2 from Nitrosopumilus maritimus (strain SCM1).